We begin with the raw amino-acid sequence, 342 residues long: Epoxide hydrolase srdG (342 aa).

One can recognise an AB hydrolase-1 domain in the interval 44–332 (ATVLLLHGWP…LIHTPEEVNK (289 aa)). Asp122 serves as the catalytic Nucleophile. Catalysis depends on His320, which acts as the Proton acceptor.

This sequence belongs to the AB hydrolase superfamily. Epoxide hydrolase family.

Functionally, highly reducing polyketide synthase; part of the gene cluster that mediates the biosynthesis of sordarial, a salicylic aldehyde structurally related to the phytotoxin pyriculol. The most interesting aspect of this pathway is formation of an aromatic product from the highly reducing polyketide synthase srdA. SrdA synthesizes a reduced polyketide chain from one molecule of acetyl-CoA and five molecules of malonyl-CoA. The polyketide chain is then reductively released as an aldehyde. The oxidoreductases srdC, srdD and srdE then oxidize one of the hydroxy groups to facilitate the intramolecular aldol condensation, followed by dehydration to yield a salicylic aldehyde. This aldehyde can undergo facile reduction by endogenous reductases to yield the alcohol 1-hydroxy-2-hydroxymethyl-3-pent-1,3-dienylbenzene. The flavin-dependent srdI counteract against the propensity of the aldehydes to be reduced under physiological conditions and is responsible for reoxidizing 1-hydroxy-2-hydroxymethyl-3-pent-1,3-dienylbenzene back to the salicylic aldehyde. This salicylic aldehyde is then selectively epoxidized by the cupin-domain-containing oxidoreductase srdB to yield the epoxide, which can be hydrolyzed stereoselectively by the hydrolase srdG to give the final product sordarial. The polypeptide is Epoxide hydrolase srdG (Neurospora crassa (strain ATCC 24698 / 74-OR23-1A / CBS 708.71 / DSM 1257 / FGSC 987)).